Consider the following 115-residue polypeptide: UPF0102 protein NMB2089 (115 aa).

Belongs to the UPF0102 family.

This Neisseria meningitidis serogroup B (strain ATCC BAA-335 / MC58) protein is UPF0102 protein NMB2089.